Reading from the N-terminus, the 280-residue chain is Intimin (280 aa).

Residues 1 to 92 (ITEIKADKTT…MLKLLEVEFF (92 aa)) enclose the Big-1 domain. Positions 127–173 (ANGGNGKYTWYSANPAIASVDPSSGQVTLKDKGETTITVVSGDKQTA) constitute a BIG2 domain. A disulfide bridge connects residues cysteine 201 and cysteine 278.

The protein belongs to the intimin/invasin family.

The protein resides in the cell outer membrane. An inverse autotransporter. The polypeptide is Intimin (eaeA) (Hafnia alvei).